We begin with the raw amino-acid sequence, 1055 residues long: Sodium/potassium exporting P-type ATPase 1 (1055 aa).

Residues 1 to 73 (MTPSIGYVDE…GADEKISISK (73 aa)) lie on the Cytoplasmic side of the membrane. Residues 74–94 (ILAHQIFNAMVLVLIISLIIA) form a helical membrane-spanning segment. Residues 95 to 99 (LAIKD) are Extracellular-facing. A helical membrane pass occupies residues 100–120 (WISGGVIGFVVFINIFVGFIQ). Topologically, residues 121–298 (ELKAEKTMGS…TNVGTPLQRK (178 aa)) are cytoplasmic. A helical membrane pass occupies residues 299–319 (LSWLAILLFWVAVLFAIVVMA). Over 320 to 328 (SQEMRVNRN) the chain is Extracellular. Residues 329–349 (VAIYAICVALSMIPSSLVVVL) traverse the membrane as a helical segment. The Cytoplasmic segment spans residues 350–789 (TITMAIGAQV…RMSSNIQKFV (440 aa)). D385 acts as the 4-aspartylphosphate intermediate in catalysis. Mg(2+) contacts are provided by D385 and T387. Residues T387, E491, K544, R586, T646, G647, D648, R705, and K711 each coordinate ATP. A Mg(2+)-binding site is contributed by D730. N733 is an ATP binding site. A helical transmembrane segment spans residues 790–810 (LQLLAENVAQALYLMIGLAFI). Topologically, residues 811–816 (DKSGYS) are extracellular. Residues 817 to 837 (VFPLSPVEVLWIIVVTSCFPA) traverse the membrane as a helical segment. Topologically, residues 838–866 (MGLGQEKASHDILEQPPNATIFTWEVIID) are cytoplasmic. A helical transmembrane segment spans residues 867-887 (MIAYGFWMAVCCLVCFVCIVY). Topologically, residues 888 to 913 (GKGDGSLGENCNEGSDTGCNLVFRGR) are extracellular. The helical transmembrane segment at 914-934 (SGAFAAFTWCALLLAWECIHL) threads the bilayer. Topologically, residues 935 to 962 (RLSFFKMRPELENPWWKQLAIDLWDNQF) are cytoplasmic. Residues 963-983 (LFWSVMGAIVSVFPVVYIPVI) traverse the membrane as a helical segment. Topologically, residues 984-990 (NNKVFLH) are extracellular. The chain crosses the membrane as a helical span at residues 991–1011 (APIGYEWGLAVAFTILFLIGA). Topologically, residues 1012 to 1055 (EGWKWFKRVYYRKSNANNPEYDLERNDPFKEYSSFSKSNTMEIV) are cytoplasmic.

It belongs to the cation transport ATPase (P-type) (TC 3.A.3) family. Type IID subfamily. Mg(2+) serves as cofactor. The active site is phosphorylated in presence of sodium or potassium and in conditions of higher pH. Not phosphorylated in presence of calcium ions.

It is found in the cell membrane. It catalyses the reaction Na(+)(in) + ATP + H2O = Na(+)(out) + ADP + phosphate + H(+). The enzyme catalyses K(+)(in) + ATP + H2O = K(+)(out) + ADP + phosphate + H(+). In terms of biological role, catalyzes the hydrolysis of ATP coupled with the export of sodium and potassium from the cell. May be an inefficient potassium exporter. May transport other cations such as lithium. Sodium/potassium efflux ATPases are involved in salt tolerance and maintaining the membrane potential across the plasma membrane in high salinity (Na+) or alkaline (K+) environments. This Schwanniomyces occidentalis (Yeast) protein is Sodium/potassium exporting P-type ATPase 1.